Reading from the N-terminus, the 99-residue chain is Small ribosomal subunit protein uS14m (99 aa).

It belongs to the universal ribosomal protein uS14 family.

The protein resides in the mitochondrion. The sequence is that of Small ribosomal subunit protein uS14m (RPS14) from Marchantia polymorpha (Common liverwort).